The chain runs to 713 residues: Histone-lysine N-methyltransferase SETDB2 (713 aa).

The tract at residues 78 to 109 is disordered; sequence PEVNTHRSNHTPVTQSEQENKSSAVPSASCDN. A compositionally biased stretch (polar residues) spans 87 to 109; sequence HTPVTQSEQENKSSAVPSASCDN. An MBD domain is found at 161–233; the sequence is LSLKGENPLQ…DNFSFNTYVQ (73 aa). The Pre-SET domain occupies 294-367; sequence DSCDCSEGCI…MCQNRVIQHG (74 aa). Positions 296, 298, 302, 308, 310, 348, 352, 354, and 359 each coordinate Zn(2+). One can recognise an SET domain in the interval 370 to 688; sequence VRLQVFKSEK…ARTELTWDYG (319 aa). 380–382 serves as a coordination point for S-adenosyl-L-methionine; sequence KGW. 2 stretches are compositionally biased toward basic and acidic residues: residues 511–534 and 579–592; these read EDKN…HEDL and TKQV…KSQE. Disordered regions lie at residues 511–549 and 579–608; these read EDKN…QLTE and TKQV…CDEE. S-adenosyl-L-methionine contacts are provided by residues arginine 642 and 645–646; that span reads NH. Zn(2+) contacts are provided by cysteine 648, cysteine 701, cysteine 703, and cysteine 708.

This sequence belongs to the class V-like SAM-binding methyltransferase superfamily.

It localises to the nucleus. The protein localises to the chromosome. The catalysed reaction is N(6),N(6)-dimethyl-L-lysyl(9)-[histone H3] + S-adenosyl-L-methionine = N(6),N(6),N(6)-trimethyl-L-lysyl(9)-[histone H3] + S-adenosyl-L-homocysteine + H(+). Functionally, histone methyltransferase involved in left-right axis specification in early development and mitosis. Specifically trimethylates 'Lys-9' of histone H3 (H3K9me3). H3K9me3 is a specific tag for epigenetic transcriptional repression that recruits HP1 (CBX1, CBX3 and/or CBX5) proteins to methylated histones. Contributes to H3K9me3 in both the interspersed repetitive elements and centromere-associated repeats. Plays a role in chromosome condensation and segregation during mitosis. The polypeptide is Histone-lysine N-methyltransferase SETDB2 (Setdb2) (Mus musculus (Mouse)).